Reading from the N-terminus, the 156-residue chain is Small ribosomal subunit protein uS7 (156 aa).

This sequence belongs to the universal ribosomal protein uS7 family. Part of the 30S ribosomal subunit. Contacts proteins S9 and S11.

Functionally, one of the primary rRNA binding proteins, it binds directly to 16S rRNA where it nucleates assembly of the head domain of the 30S subunit. Is located at the subunit interface close to the decoding center, probably blocks exit of the E-site tRNA. This is Small ribosomal subunit protein uS7 from Vibrio campbellii (strain ATCC BAA-1116).